Here is a 297-residue protein sequence, read N- to C-terminus: L-threonate dehydrogenase (297 aa).

NAD(+) is bound by residues 3–31 (RNIG…VHAC) and Thr97. The active site involves Lys173. Lys241 contacts NAD(+).

It belongs to the HIBADH-related family. L-threonate dehydrogenase subfamily.

It catalyses the reaction L-threonate + NAD(+) = 2-dehydro-L-erythronate + NADH + H(+). Catalyzes oxidation of L-threonate to 2-oxo-tetronate. Can use either NAD(+) or NADP(+) as cosubstrate, with a preference for NAD(+). This is L-threonate dehydrogenase from Cupriavidus necator (strain ATCC 17699 / DSM 428 / KCTC 22496 / NCIMB 10442 / H16 / Stanier 337) (Ralstonia eutropha).